The following is a 376-amino-acid chain: NIF3-like protein 1 (376 aa).

N6-acetyllysine is present on lysine 108. The mediates interaction with COPS2 stretch occupies residues leucine 243 to valine 376. Threonine 254 carries the post-translational modification Phosphothreonine. A Phosphoserine modification is found at serine 258.

This sequence belongs to the GTP cyclohydrolase I type 2/NIF3 family. Homodimer. Interacts with COPS2. Interacts with THOC7. Ubiquitous. Detected in all tissues tested with higher expression in cerebellum, heart and kidney and to a lower level in cerebrum, lung, liver, spleen and muscle.

Its subcellular location is the cytoplasm. It is found in the nucleus. Its function is as follows. May function as a transcriptional corepressor through its interaction with COPS2, negatively regulating the expression of genes involved in neuronal differentiation. The chain is NIF3-like protein 1 from Mus musculus (Mouse).